Consider the following 385-residue polypeptide: V-type proton ATPase subunit C (385 aa).

Belongs to the V-ATPase C subunit family. As to quaternary structure, V-ATPase is a heteromultimeric enzyme made up of two complexes: the ATP-hydrolytic V1 complex and the proton translocation V0 complex. The V1 complex consists of three catalytic AB heterodimers that form a heterohexamer, three peripheral stalks each consisting of EG heterodimers, one central rotor including subunits D and F, and the regulatory subunits C and H. The proton translocation complex V0 consists of the proton transport subunit a, a ring of proteolipid subunits c9c'', rotary subunit d, subunits e and f, and the accessory subunits vah-19/Ac45 and vah-20/PRR. Interacts with V-type proton ATPase subunits a1 unc-32, a2 vha-5 and a3 vha-6.

It is found in the cytoplasm. Its subcellular location is the membrane. Subunit of the V1 complex of vacuolar(H+)-ATPase (V-ATPase), a multisubunit enzyme composed of a peripheral complex (V1) that hydrolyzes ATP and a membrane integral complex (V0) that translocates protons. V-ATPase is responsible for acidifying and maintaining the pH of intracellular compartments and in some cell types, is targeted to the plasma membrane, where it is responsible for acidifying the extracellular environment. Subunit C is necessary for the assembly of the catalytic sector of the enzyme and is likely to have a specific function in its catalytic activity. Has roles in embryogenesis and ovulation. In Caenorhabditis briggsae, this protein is V-type proton ATPase subunit C.